Consider the following 233-residue polypeptide: uncharacterized protein (233 aa).

The protein belongs to the asfivirus H233R family.

This is an uncharacterized protein from African swine fever virus (isolate Warthog/Namibia/Wart80/1980) (ASFV).